A 492-amino-acid polypeptide reads, in one-letter code: N-succinylglutamate 5-semialdehyde dehydrogenase (492 aa).

220–225 (GSANTG) provides a ligand contact to NAD(+). Catalysis depends on residues Glu243 and Cys277.

Belongs to the aldehyde dehydrogenase family. AstD subfamily.

It carries out the reaction N-succinyl-L-glutamate 5-semialdehyde + NAD(+) + H2O = N-succinyl-L-glutamate + NADH + 2 H(+). It participates in amino-acid degradation; L-arginine degradation via AST pathway; L-glutamate and succinate from L-arginine: step 4/5. In terms of biological role, catalyzes the NAD-dependent reduction of succinylglutamate semialdehyde into succinylglutamate. The protein is N-succinylglutamate 5-semialdehyde dehydrogenase of Escherichia fergusonii (strain ATCC 35469 / DSM 13698 / CCUG 18766 / IAM 14443 / JCM 21226 / LMG 7866 / NBRC 102419 / NCTC 12128 / CDC 0568-73).